The chain runs to 663 residues: Methionine--tRNA ligase (663 aa).

The 'HIGH' region signature appears at 10–20 (AYTNGPLHLGH). Zn(2+) is bound by residues Cys-142, Cys-145, Cys-154, and Cys-157. Positions 323–327 (KMSTS) match the 'KMSKS' region motif. Thr-326 contributes to the ATP binding site. The tRNA-binding domain maps to 563–663 (YFTKVDLRVG…REISLGSKIH (101 aa)).

The protein belongs to the class-I aminoacyl-tRNA synthetase family. MetG type 1 subfamily. In terms of assembly, homodimer. Zn(2+) serves as cofactor.

It is found in the cytoplasm. It carries out the reaction tRNA(Met) + L-methionine + ATP = L-methionyl-tRNA(Met) + AMP + diphosphate. In terms of biological role, is required not only for elongation of protein synthesis but also for the initiation of all mRNA translation through initiator tRNA(fMet) aminoacylation. This chain is Methionine--tRNA ligase, found in Methanococcus vannielii (strain ATCC 35089 / DSM 1224 / JCM 13029 / OCM 148 / SB).